The following is a 284-amino-acid chain: Shikimate kinase (284 aa).

85–95 (PLAAGLKSSSA) contributes to the ATP binding site.

It belongs to the GHMP kinase family. Archaeal shikimate kinase subfamily.

The protein resides in the cytoplasm. It carries out the reaction shikimate + ATP = 3-phosphoshikimate + ADP + H(+). It participates in metabolic intermediate biosynthesis; chorismate biosynthesis; chorismate from D-erythrose 4-phosphate and phosphoenolpyruvate: step 5/7. The protein is Shikimate kinase of Halobacterium salinarum (strain ATCC 29341 / DSM 671 / R1).